We begin with the raw amino-acid sequence, 216 residues long: MESLYHQTNNVVKDIERDFQRLSQLSAQESLDVENGIQLKITQANANCDRLDVLLYKVPPSQRQSSKLRVDQLKYDLRHLQTSLQTARERRQRRMQEISEREQLLNHRFTANSAQPEETRLQLDYELQHHTQLGNAHRGVDDMIASGSGILESLISQRMTLGGAHKRIQAIGSTLGLSNHTMKLIERRLVEDRRIFIGGVVVTLLIIALIIYFLVL.

The Cytoplasmic portion of the chain corresponds to 1–194 (MESLYHQTNN…IERRLVEDRR (194 aa)). The stretch at 62-103 (QRQSSKLRVDQLKYDLRHLQTSLQTARERRQRRMQEISEREQ) forms a coiled coil. The chain crosses the membrane as a helical; Anchor for type IV membrane protein span at residues 195 to 215 (IFIGGVVVTLLIIALIIYFLV). Leucine 216 is a topological domain (vesicular).

It belongs to the GOSR2 family. Part of a unique SNARE complex.

Its subcellular location is the golgi apparatus. The protein resides in the cis-Golgi network membrane. The protein localises to the golgi apparatus membrane. It is found in the endoplasmic reticulum membrane. In terms of biological role, involved in transport of proteins from the cis/medial-Golgi to the trans-Golgi network. This Drosophila melanogaster (Fruit fly) protein is Probable Golgi SNAP receptor complex member 2.